Consider the following 160-residue polypeptide: Large ribosomal subunit protein uL16 (160 aa).

The protein belongs to the universal ribosomal protein uL16 family. In terms of assembly, part of the 50S ribosomal subunit.

Its function is as follows. Binds 23S rRNA and is also seen to make contacts with the A and possibly P site tRNAs. This is Large ribosomal subunit protein uL16 from Prochlorococcus marinus (strain MIT 9301).